The sequence spans 412 residues: uncharacterized protein (412 aa).

A run of 11 helical transmembrane segments spans residues 17-37 (LLLA…ELVI), 54-74 (VLAL…PLLV), 91-111 (MIFI…FFFL), 112-132 (GRAL…AVVG), 146-166 (LIVS…SFIG), 173-193 (WTFW…LLEM), 225-245 (VYIT…SFLG), 257-277 (TAAG…VITG), 299-319 (LLAC…SLFI), 346-366 (VMVF…ALMG), and 375-395 (AAVG…SVFA).

The protein belongs to the major facilitator superfamily.

It is found in the cell membrane. This is an uncharacterized protein from Bacillus subtilis (strain 168).